The primary structure comprises 203 residues: NADH dehydrogenase [ubiquinone] 1 alpha subcomplex assembly factor 4 (203 aa).

The protein belongs to the NDUFAF4 family. In terms of assembly, together with NdufAF3 associates with mitochondrial complex I assembly intermediates during its biogenesis.

Functionally, involved in the assembly of mitochondrial NADH:ubiquinone oxidoreductase complex (complex I). Together with NdufAF3, involved in biogenesis of complex 1 modules N, Q and P-peripheral, but not the P-distal module. Required for recruitment of the complex I assembly factor Timmdc1 to complex 1 assembly intermediates. The chain is NADH dehydrogenase [ubiquinone] 1 alpha subcomplex assembly factor 4 from Drosophila melanogaster (Fruit fly).